The sequence spans 414 residues: Argininosuccinate synthase (414 aa).

Residues 15-23 (AYSGGLDTS) and A42 each bind ATP. Residues Y93 and S98 each coordinate L-citrulline. Residue G123 participates in ATP binding. T125, N129, and D130 together coordinate L-aspartate. L-citrulline is bound at residue N129. L-citrulline-binding residues include R133, S182, S191, E267, and Y279.

It belongs to the argininosuccinate synthase family. Type 1 subfamily. As to quaternary structure, homotetramer.

The protein resides in the cytoplasm. It catalyses the reaction L-citrulline + L-aspartate + ATP = 2-(N(omega)-L-arginino)succinate + AMP + diphosphate + H(+). The protein operates within amino-acid biosynthesis; L-arginine biosynthesis; L-arginine from L-ornithine and carbamoyl phosphate: step 2/3. This chain is Argininosuccinate synthase, found in Deinococcus geothermalis (strain DSM 11300 / CIP 105573 / AG-3a).